A 449-amino-acid polypeptide reads, in one-letter code: 3-phosphoshikimate 1-carboxyvinyltransferase (449 aa).

The disordered stretch occupies residues 1 to 29; it reads MSHDSVPSPITARAGTPLRGRLRPPGDKS. 3-phosphoshikimate contacts are provided by Lys-28, Ser-29, and Arg-33. Lys-28 contacts phosphoenolpyruvate. The phosphoenolpyruvate site is built by Gly-101 and Arg-129. 3-phosphoshikimate contacts are provided by Ser-175, Gln-177, Asp-330, and Lys-357. Gln-177 is a binding site for phosphoenolpyruvate. Catalysis depends on Asp-330, which acts as the Proton acceptor. Phosphoenolpyruvate-binding residues include Arg-361 and Arg-405.

The protein belongs to the EPSP synthase family. In terms of assembly, monomer.

It is found in the cytoplasm. The enzyme catalyses 3-phosphoshikimate + phosphoenolpyruvate = 5-O-(1-carboxyvinyl)-3-phosphoshikimate + phosphate. The protein operates within metabolic intermediate biosynthesis; chorismate biosynthesis; chorismate from D-erythrose 4-phosphate and phosphoenolpyruvate: step 6/7. In terms of biological role, catalyzes the transfer of the enolpyruvyl moiety of phosphoenolpyruvate (PEP) to the 5-hydroxyl of shikimate-3-phosphate (S3P) to produce enolpyruvyl shikimate-3-phosphate and inorganic phosphate. The chain is 3-phosphoshikimate 1-carboxyvinyltransferase from Methylobacterium sp. (strain 4-46).